We begin with the raw amino-acid sequence, 918 residues long: Calcium-transporting ATPase type 2C member 1 (918 aa).

Residues 1–78 (MKVARFQKIP…EPLWKKYISQ (78 aa)) lie on the Cytoplasmic side of the membrane. Residues 79–95 (FKNPLIMLLLASAVISI) form a helical membrane-spanning segment. The Extracellular portion of the chain corresponds to 96 to 99 (LMRQ). Residues 100–121 (FDDAVSITVAIVIVVTVAFVQE) form a helical membrane-spanning segment. Topologically, residues 122-262 (YRSEKSLEEL…PKTPLQKSMD (141 aa)) are cytoplasmic. The chain crosses the membrane as a helical span at residues 263–282 (LLGKQLSFYSFGIIGIIMLV). The Extracellular segment spans residues 283 to 294 (GWLLGKDILEMF). A helical transmembrane segment spans residues 295–316 (TISVSLAVAAIPEGLPIVVTVT). Topologically, residues 317 to 699 (LALGVMRMVK…EGKGIYNNIK (383 aa)) are cytoplasmic. Catalysis depends on aspartate 349, which acts as the 4-aspartylphosphate intermediate. 2 residues coordinate Mg(2+): aspartate 643 and aspartate 647. The chain crosses the membrane as a helical span at residues 700 to 722 (NFVRFQLSTSIAALTLISLATLM). Over 723–727 (NFPNP) the chain is Extracellular. A helical membrane pass occupies residues 728–751 (LNAMQILWINIIMDGPPAQSLGVE). Over 752–775 (PVDKDVIRKPPRNWKDSILTKNLI) the chain is Cytoplasmic. A helical transmembrane segment spans residues 776 to 794 (LKILVSSIIIVCGTLFVFW). Over 795-801 (RELRDNV) the chain is Extracellular. A helical transmembrane segment spans residues 802–827 (ITPRDTTMTFTCFVFFDMFNALSSRS). At 828–842 (QTKSVFEIGLCSNKM) the chain is on the cytoplasmic side. Residues 843 to 862 (FCYAVLGSIMGQLLVIYFPP) traverse the membrane as a helical segment. Topologically, residues 863–875 (LQKVFQTESLSIL) are extracellular. A helical membrane pass occupies residues 876–892 (DLLFLLGLTSSVCIVSE). The Cytoplasmic portion of the chain corresponds to 893–918 (IIKKVERSREKVQKNAGSASSSFLEV).

Belongs to the cation transport ATPase (P-type) (TC 3.A.3) family. Type IIA subfamily. As to quaternary structure, monomer. Homodimer. In terms of tissue distribution, expressed in hippocampal neurons in the CA3 region of the Amon's horn (at protein level). Expressed in brain, heart, lung, stomach, liver, colon and mammary gland.

It localises to the golgi apparatus. Its subcellular location is the trans-Golgi network membrane. The protein resides in the golgi stack membrane. It carries out the reaction Ca(2+)(in) + ATP + H2O = Ca(2+)(out) + ADP + phosphate + H(+). It catalyses the reaction Mn(2+)(in) + ATP + H2O = Mn(2+)(out) + ADP + phosphate + H(+). Its function is as follows. ATP-driven pump that supplies the Golgi apparatus with Ca(2+) and Mn(2+) ions, both essential cofactors for processing and trafficking of newly synthesized proteins in the secretory pathway. Within a catalytic cycle, acquires Ca(2+) or Mn(2+) ions on the cytoplasmic side of the membrane and delivers them to the lumenal side. The transfer of ions across the membrane is coupled to ATP hydrolysis and is associated with a transient phosphorylation that shifts the pump conformation from inward-facing to outward-facing state. Plays a primary role in the maintenance of Ca(2+) homeostasis in the trans-Golgi compartment with a functional impact on Golgi and post-Golgi protein sorting as well as a structural impact on cisternae morphology. Responsible for loading the Golgi stores with Ca(2+) ions in keratinocytes, contributing to keratinocyte differentiation and epidermis integrity. Participates in Ca(2+) and Mn(2+) ions uptake into the Golgi store of hippocampal neurons and regulates protein trafficking required for neural polarity. May also play a role in the maintenance of Ca(2+) and Mn(2+) homeostasis and signaling in the cytosol while preventing cytotoxicity. The protein is Calcium-transporting ATPase type 2C member 1 of Mus musculus (Mouse).